Here is a 368-residue protein sequence, read N- to C-terminus: 4-hydroxy-3-methylbut-2-en-1-yl diphosphate synthase (flavodoxin) (368 aa).

[4Fe-4S] cluster is bound by residues cysteine 268, cysteine 271, cysteine 303, and glutamate 310.

The protein belongs to the IspG family. [4Fe-4S] cluster serves as cofactor.

It catalyses the reaction (2E)-4-hydroxy-3-methylbut-2-enyl diphosphate + oxidized [flavodoxin] + H2O + 2 H(+) = 2-C-methyl-D-erythritol 2,4-cyclic diphosphate + reduced [flavodoxin]. Its pathway is isoprenoid biosynthesis; isopentenyl diphosphate biosynthesis via DXP pathway; isopentenyl diphosphate from 1-deoxy-D-xylulose 5-phosphate: step 5/6. Functionally, converts 2C-methyl-D-erythritol 2,4-cyclodiphosphate (ME-2,4cPP) into 1-hydroxy-2-methyl-2-(E)-butenyl 4-diphosphate. The protein is 4-hydroxy-3-methylbut-2-en-1-yl diphosphate synthase (flavodoxin) of Bacillus cytotoxicus (strain DSM 22905 / CIP 110041 / 391-98 / NVH 391-98).